The chain runs to 186 residues: Large ribosomal subunit protein uL6 (186 aa).

The protein belongs to the universal ribosomal protein uL6 family. Part of the 50S ribosomal subunit.

Its function is as follows. This protein binds to the 23S rRNA, and is important in its secondary structure. It is located near the subunit interface in the base of the L7/L12 stalk, and near the tRNA binding site of the peptidyltransferase center. This Sulfurisphaera tokodaii (strain DSM 16993 / JCM 10545 / NBRC 100140 / 7) (Sulfolobus tokodaii) protein is Large ribosomal subunit protein uL6.